Here is a 146-residue protein sequence, read N- to C-terminus: MRVVLQRSKKASVTVDGEIVGQIPFGLTLLVGITHEDTEKDATYIAEKISNLRIFEDESGKMNHSVLDVEGQVLSISQFTLYGDCRKGRRPNFMDAAKPDYAERLYDFFNEEVRKQGLHVETGKFGAMMDVSLINDGPVTLIVESK.

Positions Gly137–Pro138 match the Gly-cisPro motif, important for rejection of L-amino acids motif.

It belongs to the DTD family. In terms of assembly, homodimer.

It localises to the cytoplasm. It catalyses the reaction glycyl-tRNA(Ala) + H2O = tRNA(Ala) + glycine + H(+). The catalysed reaction is a D-aminoacyl-tRNA + H2O = a tRNA + a D-alpha-amino acid + H(+). In terms of biological role, an aminoacyl-tRNA editing enzyme that deacylates mischarged D-aminoacyl-tRNAs. Also deacylates mischarged glycyl-tRNA(Ala), protecting cells against glycine mischarging by AlaRS. Acts via tRNA-based rather than protein-based catalysis; rejects L-amino acids rather than detecting D-amino acids in the active site. By recycling D-aminoacyl-tRNA to D-amino acids and free tRNA molecules, this enzyme counteracts the toxicity associated with the formation of D-aminoacyl-tRNA entities in vivo and helps enforce protein L-homochirality. The sequence is that of D-aminoacyl-tRNA deacylase from Bacillus cereus (strain G9842).